The sequence spans 223 residues: PRA1 family protein B5 (223 aa).

5 helical membrane-spanning segments follow: residues 83–103 (SSYFRVNYVCIVALILGFSLL), 105–125 (HPFSLILLLCLAASWLFLYLF), 146–166 (GGLILSTIAVIFFTSVGSVLI), 170–190 (MIGIATICVHGAFRAPDDLFL), and 196–216 (AASGFLSFIGVPAIPSVAPSA).

This sequence belongs to the PRA1 family. As to quaternary structure, interacts with PRA1B1, PRA1B2, PRA1B3, PRA1B4, PRA1B6 and PRA1E. In terms of tissue distribution, expressed in roots, lateral roots, lateral root caps, columella cells, leaves, and shoot apex.

The protein resides in the endosome membrane. Its function is as follows. May be involved in both secretory and endocytic intracellular trafficking in the endosomal/prevacuolar compartments. This Arabidopsis thaliana (Mouse-ear cress) protein is PRA1 family protein B5 (PRA1B5).